The following is a 277-amino-acid chain: Mitochondrial outer membrane protein porin 5 (277 aa).

It belongs to the eukaryotic mitochondrial porin (TC 1.B.8.1) family.

The protein localises to the mitochondrion outer membrane. In terms of biological role, forms a channel through the mitochondrial outer membrane that allows diffusion of small hydrophilic molecules. The channel adopts an open conformation at low or zero membrane potential and a closed conformation at potentials above 30-40 mV. The open state has a weak anion selectivity whereas the closed state is cation-selective. This Oryza sativa subsp. japonica (Rice) protein is Mitochondrial outer membrane protein porin 5 (VDAC5).